A 179-amino-acid chain; its full sequence is Acireductone dioxygenase (179 aa).

4 residues coordinate Fe(2+): histidine 100, histidine 102, glutamate 106, and histidine 145. The Ni(2+) site is built by histidine 100, histidine 102, glutamate 106, and histidine 145.

The protein belongs to the acireductone dioxygenase (ARD) family. In terms of assembly, monomer. Fe(2+) serves as cofactor. Requires Ni(2+) as cofactor.

The catalysed reaction is 1,2-dihydroxy-5-(methylsulfanyl)pent-1-en-3-one + O2 = 3-(methylsulfanyl)propanoate + CO + formate + 2 H(+). It catalyses the reaction 1,2-dihydroxy-5-(methylsulfanyl)pent-1-en-3-one + O2 = 4-methylsulfanyl-2-oxobutanoate + formate + 2 H(+). It functions in the pathway amino-acid biosynthesis; L-methionine biosynthesis via salvage pathway; L-methionine from S-methyl-5-thio-alpha-D-ribose 1-phosphate: step 5/6. In terms of biological role, catalyzes 2 different reactions between oxygen and the acireductone 1,2-dihydroxy-3-keto-5-methylthiopentene (DHK-MTPene) depending upon the metal bound in the active site. Fe-containing acireductone dioxygenase (Fe-ARD) produces formate and 2-keto-4-methylthiobutyrate (KMTB), the alpha-ketoacid precursor of methionine in the methionine recycle pathway. Ni-containing acireductone dioxygenase (Ni-ARD) produces methylthiopropionate, carbon monoxide and formate, and does not lie on the methionine recycle pathway. The polypeptide is Acireductone dioxygenase (Bacillus licheniformis (strain ATCC 14580 / DSM 13 / JCM 2505 / CCUG 7422 / NBRC 12200 / NCIMB 9375 / NCTC 10341 / NRRL NRS-1264 / Gibson 46)).